We begin with the raw amino-acid sequence, 196 residues long: MADS-box protein FLOWERING LOCUS C (196 aa).

The MADS-box domain maps to 1 to 61 (MGRKKLEIKR…GKLYSFSSGD (61 aa)). The Nuclear localization signal motif lies at 8–15 (IKRIENKS). One can recognise a K-box domain in the interval 80–170 (ALDHQSKALN…ASQMENNHHV (91 aa)).

High expression in the vegetative apex and in root tissue and lower expression in leaves and stems. Not detected in young tissues of the inflorescence. Before fertilization, expressed in ovules, but not in pollen or stamens, of non-vernalized plants. After vernalization, not detected in ovules.

The protein localises to the nucleus. Functionally, putative transcription factor that seems to play a central role in the regulation of flowering time in the late-flowering phenotype by interacting with 'FRIGIDA', the autonomous and the vernalization flowering pathways. Inhibits flowering by repressing 'SUPPRESSOR OF OVEREXPRESSION OF CONSTANS 1'. At elevated temperatures (e.g. 29 degrees Celsius), maintained at high levels in a JMJ30/JMJ32-dependent manner to prevent extreme precocious flowering. This is MADS-box protein FLOWERING LOCUS C from Arabidopsis thaliana (Mouse-ear cress).